A 282-amino-acid chain; its full sequence is Urease accessory protein UreD (282 aa).

The protein belongs to the UreD family. As to quaternary structure, ureD, UreF and UreG form a complex that acts as a GTP-hydrolysis-dependent molecular chaperone, activating the urease apoprotein by helping to assemble the nickel containing metallocenter of UreC. The UreE protein probably delivers the nickel.

It localises to the cytoplasm. In terms of biological role, required for maturation of urease via the functional incorporation of the urease nickel metallocenter. The polypeptide is Urease accessory protein UreD (Methylobacterium sp. (strain 4-46)).